Here is a 227-residue protein sequence, read N- to C-terminus: KH domain-containing protein MJ0443 (227 aa).

2 KH domains span residues 14–77 (KSIE…RDIV) and 106–163 (DYAS…KEAV).

This Methanocaldococcus jannaschii (strain ATCC 43067 / DSM 2661 / JAL-1 / JCM 10045 / NBRC 100440) (Methanococcus jannaschii) protein is KH domain-containing protein MJ0443.